The primary structure comprises 86 residues: MERNQRKTLVGRVVSDKMDKTITVIVETKRNHPVYGKRINYSKKYKAHDEKNLAKEGDIVRIMETRPLSATKRFRLVEIVEEAVII.

The protein belongs to the universal ribosomal protein uS17 family. As to quaternary structure, part of the 30S ribosomal subunit.

In terms of biological role, one of the primary rRNA binding proteins, it binds specifically to the 5'-end of 16S ribosomal RNA. In Streptococcus equi subsp. equi (strain 4047), this protein is Small ribosomal subunit protein uS17.